The chain runs to 407 residues: 1-deoxy-D-xylulose 5-phosphate reductoisomerase (407 aa).

T25, G26, S27, I28, N53, and N136 together coordinate NADPH. Residue K137 coordinates 1-deoxy-D-xylulose 5-phosphate. E138 contacts NADPH. Residue D162 coordinates Mn(2+). Residues S163, E164, S188, and H211 each coordinate 1-deoxy-D-xylulose 5-phosphate. E164 is a Mn(2+) binding site. G217 serves as a coordination point for NADPH. 1-deoxy-D-xylulose 5-phosphate contacts are provided by S224, N229, K230, and E233. Residue E233 participates in Mn(2+) binding.

The protein belongs to the DXR family. Mg(2+) is required as a cofactor. It depends on Mn(2+) as a cofactor.

The enzyme catalyses 2-C-methyl-D-erythritol 4-phosphate + NADP(+) = 1-deoxy-D-xylulose 5-phosphate + NADPH + H(+). The protein operates within isoprenoid biosynthesis; isopentenyl diphosphate biosynthesis via DXP pathway; isopentenyl diphosphate from 1-deoxy-D-xylulose 5-phosphate: step 1/6. In terms of biological role, catalyzes the NADPH-dependent rearrangement and reduction of 1-deoxy-D-xylulose-5-phosphate (DXP) to 2-C-methyl-D-erythritol 4-phosphate (MEP). This is 1-deoxy-D-xylulose 5-phosphate reductoisomerase from Bradyrhizobium sp. (strain ORS 278).